The primary structure comprises 805 residues: N-(5-amino-5-carboxypentanoyl)-L-cysteinyl-D-valine synthase (805 aa).

Positions 783-805 (PDTGGGAVGSTTTGGVRGELREI) are disordered.

It belongs to the ATP-dependent AMP-binding enzyme family. It depends on pantetheine 4'-phosphate as a cofactor.

It carries out the reaction L-2-aminoadipate + L-valine + L-cysteine + 3 ATP + H2O = N-[(5S)-5-amino-5-carboxypentanoyl]-L-cysteinyl-D-valine + 3 AMP + 3 diphosphate + 3 H(+). It functions in the pathway antibiotic biosynthesis; penicillin G biosynthesis; penicillin G from L-alpha-aminoadipate and L-cysteine and L-valine: step 1/3. In terms of biological role, each of the constituent amino acids of ACV are activated as aminoacyl-adenylates with peptide bonds formed through the participation of amino acid thioester intermediates. The chain is N-(5-amino-5-carboxypentanoyl)-L-cysteinyl-D-valine synthase (pcbAB) from Streptomyces clavuligerus.